The chain runs to 490 residues: GTPase Der (490 aa).

EngA-type G domains follow at residues 3 to 166 and 203 to 376; these read PVVA…MEDL and IKLA…DSST. GTP-binding positions include 9–16, 56–60, 118–121, 209–216, 256–260, and 321–324; these read GRPNVGKS, DTGGI, NKTD, DTAGV, and NKWD. The KH-like domain maps to 377–461; that stretch reads RRVGTSMLTR…PIRIQFKEGE (85 aa).

This sequence belongs to the TRAFAC class TrmE-Era-EngA-EngB-Septin-like GTPase superfamily. EngA (Der) GTPase family. Associates with the 50S ribosomal subunit.

Functionally, GTPase that plays an essential role in the late steps of ribosome biogenesis. This is GTPase Der from Escherichia coli O127:H6 (strain E2348/69 / EPEC).